The chain runs to 484 residues: 3-isopropylmalate dehydratase large subunit (484 aa).

Residues cysteine 352, cysteine 412, and cysteine 415 each contribute to the [4Fe-4S] cluster site. Residues 463-484 are disordered; that stretch reads TLSSPSDLDPAPASAAIRTDAA. The segment covering 464-478 has biased composition (low complexity); it reads LSSPSDLDPAPASAA.

It belongs to the aconitase/IPM isomerase family. LeuC type 1 subfamily. In terms of assembly, heterodimer of LeuC and LeuD. It depends on [4Fe-4S] cluster as a cofactor.

It catalyses the reaction (2R,3S)-3-isopropylmalate = (2S)-2-isopropylmalate. It functions in the pathway amino-acid biosynthesis; L-leucine biosynthesis; L-leucine from 3-methyl-2-oxobutanoate: step 2/4. In terms of biological role, catalyzes the isomerization between 2-isopropylmalate and 3-isopropylmalate, via the formation of 2-isopropylmaleate. This chain is 3-isopropylmalate dehydratase large subunit, found in Pseudarthrobacter chlorophenolicus (strain ATCC 700700 / DSM 12829 / CIP 107037 / JCM 12360 / KCTC 9906 / NCIMB 13794 / A6) (Arthrobacter chlorophenolicus).